The chain runs to 376 residues: tRNA-specific 2-thiouridylase MnmA (376 aa).

ATP-binding positions include 10–17 (GMSGGVDS) and M36. Residues 96–98 (NPD) form an interaction with target base in tRNA region. C101 serves as the catalytic Nucleophile. C101 and C198 are joined by a disulfide. G125 provides a ligand contact to ATP. The interval 148 to 150 (KDQ) is interaction with tRNA. C198 (cysteine persulfide intermediate) is an active-site residue. An interaction with tRNA region spans residues 305 to 306 (RY).

This sequence belongs to the MnmA/TRMU family.

It localises to the cytoplasm. It carries out the reaction S-sulfanyl-L-cysteinyl-[protein] + uridine(34) in tRNA + AH2 + ATP = 2-thiouridine(34) in tRNA + L-cysteinyl-[protein] + A + AMP + diphosphate + H(+). In terms of biological role, catalyzes the 2-thiolation of uridine at the wobble position (U34) of tRNA, leading to the formation of s(2)U34. The protein is tRNA-specific 2-thiouridylase MnmA of Protochlamydia amoebophila (strain UWE25).